A 237-amino-acid chain; its full sequence is uncharacterized protein (237 aa).

50–57 is a binding site for ATP; the sequence is APPGTGKS.

This is an uncharacterized protein from Escherichia coli (strain K12).